The following is a 299-amino-acid chain: Dye-decolorizing peroxidase YfeX (299 aa).

Heme is bound at residue histidine 215.

The protein belongs to the DyP-type peroxidase family. It depends on heme b as a cofactor.

The protein resides in the cytoplasm. Functionally, has both general peroxidase activity and dye-decolorizing activity. Can catalyze the oxidation of 2,2'-azino-bis(3-ethylbenzothiazoline-6-sulphonic acid) (ABTS), and the phenolic compounds guaiacol and catechol. Also decolorizes the anthraquinone dye reactive blue 19 (RB19). The protein is Dye-decolorizing peroxidase YfeX of Escherichia coli O157:H7.